A 389-amino-acid polypeptide reads, in one-letter code: Endo-chitosanase C (389 aa).

Residues 1–22 (MPIKSFASRLALSLAICGTAMG) form the signal peptide. An R3-1 repeat occupies 280–313 (CSWPGHCAGFKNKGATCSSNDDCSDDLACQNGKC). Residues 320–350 (ETCSWEGHCKGATCSSNDDCSDELACISGIC) form an R3-2 repeat. An R3-3 repeat occupies 357-387 (ETCEWEGHCEGASCSSHDDCDGNLACKNGKC).

Belongs to the glycosyl hydrolase 75 family.

The protein localises to the secreted. The catalysed reaction is Endohydrolysis of beta-(1-&gt;4)-linkages between D-glucosamine residues in a partly acetylated chitosan.. Functionally, chitosanase catalyzing the endo-type cleavage of chitosan, the deacylated form of chitin. Chitosanase may be crucial in the degradation of the deacetylated portion of chitin in the fungal cell wall. Chitoolisaccharides produced by the hydrolysis of partially N-acetylated chitosan are known to have many biological activities, including antibacterial activity, immune-enhancing effects, and elicitor activity. This is Endo-chitosanase C (csnC) from Aspergillus oryzae (strain ATCC 42149 / RIB 40) (Yellow koji mold).